The chain runs to 331 residues: Elongation factor Ts, mitochondrial (331 aa).

Positions 254–295 (SPLTVGEMPEVREEEGEKKDGDKQDEEERSTDSDEDETQMLR) are disordered. Basic and acidic residues predominate over residues 262–275 (PEVREEEGEKKDGD). The span at 276-291 (KQDEEERSTDSDEDET) shows a compositional bias: acidic residues.

The protein belongs to the EF-Ts family.

The protein resides in the mitochondrion. Associates with the EF-Tu.GDP complex and induces the exchange of GDP to GTP. It remains bound to the aminoacyl-tRNA.EF-Tu.GTP complex up to the GTP hydrolysis stage on the ribosome. The sequence is that of Elongation factor Ts, mitochondrial from Branchiostoma floridae (Florida lancelet).